The chain runs to 382 residues: MTRAGLSPLAWLADIEQRRRAEGLRRELRVRPPVAAELDLASNDYLGLSQHPDVLDGGVEALRTWGGGAGGSRLVTGNTELHEAFEHQLASFLGAESALVFSSGYTANLGALVALSGPGSLIVSDALSHASLVDACRLSRARVVVSPHRDVDAVDAALAARTEERAVVVTESVFSADGDLAPLRDLHAVCRRHGALLLVDEAHGLGVRGTRGQGLLHEVGLAGAPDIVMTTTLSKALGSQGGAVLGPEAVRAHLIDTARSFIFDTGLAPAAVGAASAALRVLDAEPQRARAVLDRAAELATIAGVTEAPVSAVVSVILGDPEIAVGAAAACLDRGVRVGCFRPPTVPAGTSRLRLAARASLTDDEMALARQVLTDVLATARA.

R26 is a binding site for substrate. Pyridoxal 5'-phosphate is bound at residue 104–105 (GY). H129 lines the substrate pocket. Pyridoxal 5'-phosphate contacts are provided by residues S175, 200 to 203 (DEAH), and 232 to 235 (TLSK). K235 is subject to N6-(pyridoxal phosphate)lysine. T345 contributes to the substrate binding site.

This sequence belongs to the class-II pyridoxal-phosphate-dependent aminotransferase family. BioF subfamily. Homodimer. Requires pyridoxal 5'-phosphate as cofactor.

It catalyses the reaction 6-carboxyhexanoyl-[ACP] + L-alanine + H(+) = (8S)-8-amino-7-oxononanoate + holo-[ACP] + CO2. It participates in cofactor biosynthesis; biotin biosynthesis. In terms of biological role, catalyzes the decarboxylative condensation of pimeloyl-[acyl-carrier protein] and L-alanine to produce 8-amino-7-oxononanoate (AON), [acyl-carrier protein], and carbon dioxide. The protein is 8-amino-7-oxononanoate synthase (bioF) of Mycolicibacterium smegmatis (strain ATCC 700084 / mc(2)155) (Mycobacterium smegmatis).